The following is a 300-amino-acid chain: Phospholipase A1 (300 aa).

Cys4 and Cys87 form a disulfide bridge. Catalysis depends on Ser137, which acts as the Nucleophile. The Charge relay system role is filled by Asp165. Intrachain disulfides connect Cys176–Cys181 and Cys218–Cys227. His229 (charge relay system) is an active-site residue. Disulfide bonds link Cys244/Cys268, Cys245/Cys293, and Cys261/Cys266.

This sequence belongs to the AB hydrolase superfamily. Lipase family. Expressed by the venom gland.

It is found in the secreted. The enzyme catalyses a 1,2-diacyl-sn-glycero-3-phosphocholine + H2O = a 2-acyl-sn-glycero-3-phosphocholine + a fatty acid + H(+). With respect to regulation, local inflammatory effects are inhibited by antiserotonin drugs (cyproheptadine and methysergide), indomethacin, betamethasone, and antihistamine (chlorpheniramine). Its function is as follows. Catalyzes the hydrolysis of phosphatidylcholine with phospholipase A1 activity. Shows potent hemolytic activity that is responsible for its lethal effect. May act as an allergen. In vivo, induces local inflammatory effects. This Vespa basalis (Hornet) protein is Phospholipase A1.